The chain runs to 576 residues: Mitogen-activated protein kinase 15 (576 aa).

The disordered stretch occupies residues 20–50; sequence RPSSSSSSNNHDQIQNPPTVSNPNDDEDLKK. Polar residues predominate over residues 28-42; the sequence is NNHDQIQNPPTVSNP. Residues 90 to 381 form the Protein kinase domain; the sequence is YQIQEVVGKG…AEEALADPYF (292 aa). ATP is bound by residues 96–104 and Lys119; that span reads VGKGSYGVV. Asp216 functions as the Proton acceptor in the catalytic mechanism. Thr252 is modified (phosphothreonine). The TXY signature appears at 252–254; sequence TDY. At Tyr254 the chain carries Phosphotyrosine. Thr257 carries the post-translational modification Phosphothreonine. The disordered stretch occupies residues 458-535; it reads EENQGPGGRS…GGGYSARNLM (78 aa). Residues 477–501 show a composition bias toward basic and acidic residues; that stretch reads LPRERVPASKNETVEERSNDIERRT. Residues 504–520 show a composition bias toward polar residues; the sequence is AVASTLDSPKASQQAEG.

This sequence belongs to the protein kinase superfamily. CMGC Ser/Thr protein kinase family. MAP kinase subfamily. Interacts with MKK7. Post-translationally, dually phosphorylated on Thr-252 and Tyr-254, which activates the enzyme.

It catalyses the reaction L-seryl-[protein] + ATP = O-phospho-L-seryl-[protein] + ADP + H(+). The enzyme catalyses L-threonyl-[protein] + ATP = O-phospho-L-threonyl-[protein] + ADP + H(+). With respect to regulation, activated by threonine and tyrosine phosphorylation. This chain is Mitogen-activated protein kinase 15 (MPK15), found in Arabidopsis thaliana (Mouse-ear cress).